Reading from the N-terminus, the 327-residue chain is Glycerol-3-phosphate dehydrogenase [NAD(P)+] (327 aa).

NADPH is bound by residues tryptophan 11, histidine 30, and lysine 103. Residues lysine 103, glycine 131, and serine 133 each coordinate sn-glycerol 3-phosphate. NADPH is bound at residue alanine 135. Lysine 186, aspartate 243, serine 253, arginine 254, and asparagine 255 together coordinate sn-glycerol 3-phosphate. Residue lysine 186 is the Proton acceptor of the active site. Arginine 254 serves as a coordination point for NADPH. Valine 281 and glutamate 283 together coordinate NADPH.

The protein belongs to the NAD-dependent glycerol-3-phosphate dehydrogenase family.

It localises to the cytoplasm. The enzyme catalyses sn-glycerol 3-phosphate + NAD(+) = dihydroxyacetone phosphate + NADH + H(+). It carries out the reaction sn-glycerol 3-phosphate + NADP(+) = dihydroxyacetone phosphate + NADPH + H(+). The protein operates within membrane lipid metabolism; glycerophospholipid metabolism. Catalyzes the reduction of the glycolytic intermediate dihydroxyacetone phosphate (DHAP) to sn-glycerol 3-phosphate (G3P), the key precursor for phospholipid synthesis. This chain is Glycerol-3-phosphate dehydrogenase [NAD(P)+], found in Wolbachia sp. subsp. Brugia malayi (strain TRS).